The chain runs to 371 residues: UDP-N-acetylglucosamine--N-acetylmuramyl-(pentapeptide) pyrophosphoryl-undecaprenol N-acetylglucosamine transferase (371 aa).

Residues 15–17, Asn126, Arg172, Ser199, Ile256, 275–280, and Gln301 each bind UDP-N-acetyl-alpha-D-glucosamine; these read TGG and ALTVSE.

This sequence belongs to the glycosyltransferase 28 family. MurG subfamily.

The protein localises to the cell inner membrane. It carries out the reaction di-trans,octa-cis-undecaprenyl diphospho-N-acetyl-alpha-D-muramoyl-L-alanyl-D-glutamyl-meso-2,6-diaminopimeloyl-D-alanyl-D-alanine + UDP-N-acetyl-alpha-D-glucosamine = di-trans,octa-cis-undecaprenyl diphospho-[N-acetyl-alpha-D-glucosaminyl-(1-&gt;4)]-N-acetyl-alpha-D-muramoyl-L-alanyl-D-glutamyl-meso-2,6-diaminopimeloyl-D-alanyl-D-alanine + UDP + H(+). It functions in the pathway cell wall biogenesis; peptidoglycan biosynthesis. In terms of biological role, cell wall formation. Catalyzes the transfer of a GlcNAc subunit on undecaprenyl-pyrophosphoryl-MurNAc-pentapeptide (lipid intermediate I) to form undecaprenyl-pyrophosphoryl-MurNAc-(pentapeptide)GlcNAc (lipid intermediate II). The sequence is that of UDP-N-acetylglucosamine--N-acetylmuramyl-(pentapeptide) pyrophosphoryl-undecaprenol N-acetylglucosamine transferase from Francisella tularensis subsp. tularensis (strain WY96-3418).